Here is a 314-residue protein sequence, read N- to C-terminus: Putative peptide transport system permease protein BruAb2_1031 (314 aa).

6 consecutive transmembrane segments (helical) span residues 12-32, 101-121, 135-155, 177-197, 237-257, and 286-306; these read AIPV…LLPG, LALL…VVAA, LALL…VILF, WLRS…GYLA, VSVL…SVVI, and MLFL…LYTI. The ABC transmembrane type-1 domain occupies 95–304; sequence LPVTISLALL…AINVLVDILY (210 aa).

The protein belongs to the binding-protein-dependent transport system permease family. In terms of assembly, the complex is composed of two ATP-binding proteins (BruAb2_1033 and BruAb2_1034), two transmembrane proteins (BruAb2_1031 and BruAb2_1032) and a solute-binding protein (BruAb2_1030).

The protein localises to the cell inner membrane. Functionally, probably part of an ABC transporter complex that could be involved in peptide import. Probably responsible for the translocation of the substrate across the membrane. The sequence is that of Putative peptide transport system permease protein BruAb2_1031 from Brucella abortus biovar 1 (strain 9-941).